The chain runs to 260 residues: Membrane protein insertase YidC 1 (260 aa).

Residues 1–22 (MLKSYRAVLVSLSLLFVFVLSG) form the signal peptide. Cys-23 is lipidated: N-palmitoyl cysteine. The S-diacylglycerol cysteine moiety is linked to residue Cys-23. Helical transmembrane passes span 29–49 (IDAH…SFMI), 52–72 (VAHH…TLVI), 133–153 (LAGC…YYAI), 164–184 (FLWV…IAAL), and 213–233 (MPAM…LYWI).

It belongs to the OXA1/ALB3/YidC family. Type 2 subfamily.

Its subcellular location is the cell membrane. In terms of biological role, required for the insertion and/or proper folding and/or complex formation of integral membrane proteins into the membrane. Involved in integration of membrane proteins that insert both dependently and independently of the Sec translocase complex, as well as at least some lipoproteins. The sequence is that of Membrane protein insertase YidC 1 from Bacillus cereus (strain ATCC 14579 / DSM 31 / CCUG 7414 / JCM 2152 / NBRC 15305 / NCIMB 9373 / NCTC 2599 / NRRL B-3711).